The chain runs to 741 residues: Cellulose 1,4-beta-cellobiosidase (reducing end) CelS (741 aa).

The signal sequence occupies residues 1–27 (MVKSRKISILLAVAMLVSIMIPTTAFA). Residue Glu76 coordinates substrate. Glu87 serves as the catalytic Proton donor. Residues Thr140, Asn204, Asp241, Gln247, and 251-252 (TN) contribute to the substrate site. The active-site Nucleophile is Asp255. Substrate contacts are provided by residues 301-302 (KY), 326-327 (WY), Tyr421, Asp520, and 645-646 (WH). Residues 673–739 (STKLYGDVND…ILKEIDTLPY (67 aa)) enclose the Dockerin domain. 12 residues coordinate Ca(2+): Asp679, Asn681, Asp683, Gly684, Lys685, Asp690, Asp711, Leu712, Asn713, Asp715, Arg717, and Asp722.

The protein belongs to the glycosyl hydrolase 48 (cellulase L) family.

It is found in the secreted. The catalysed reaction is Hydrolysis of (1-&gt;4)-beta-D-glucosidic linkages in cellulose and similar substrates, releasing cellobiose from the reducing ends of the chains.. Its activity is regulated as follows. Inhibited by cellobiose and lactose, but not by glucose. In terms of biological role, this enzyme catalyzes the exohydrolysis of 1,4-beta-glucosidic linkages in cellulose with a preference for amorphous or crystalline cellulose over carboxymethyl cellulose. This is Cellulose 1,4-beta-cellobiosidase (reducing end) CelS (celS) from Acetivibrio thermocellus (strain ATCC 27405 / DSM 1237 / JCM 9322 / NBRC 103400 / NCIMB 10682 / NRRL B-4536 / VPI 7372) (Clostridium thermocellum).